A 75-amino-acid polypeptide reads, in one-letter code: UPF0181 protein ETA_15280 (75 aa).

The protein belongs to the UPF0181 family.

The chain is UPF0181 protein ETA_15280 from Erwinia tasmaniensis (strain DSM 17950 / CFBP 7177 / CIP 109463 / NCPPB 4357 / Et1/99).